The primary structure comprises 548 residues: Probable 2,3-bisphosphoglycerate-independent phosphoglycerate mutase (548 aa).

Positions 20 and 73 each coordinate Mn(2+). Catalysis depends on serine 73, which acts as the Phosphoserine intermediate. Substrate contacts are provided by residues histidine 134, 164–165, arginine 200, arginine 207, 279–282, and lysine 354; these read RD and RGDR. Residues aspartate 422, histidine 426, aspartate 463, histidine 464, and histidine 493 each contribute to the Mn(2+) site.

It belongs to the BPG-independent phosphoglycerate mutase family. Monomer. Mn(2+) serves as cofactor.

It catalyses the reaction (2R)-2-phosphoglycerate = (2R)-3-phosphoglycerate. It participates in carbohydrate degradation; glycolysis; pyruvate from D-glyceraldehyde 3-phosphate: step 3/5. Functionally, catalyzes the interconversion of 2-phosphoglycerate and 3-phosphoglycerate. The chain is Probable 2,3-bisphosphoglycerate-independent phosphoglycerate mutase (gpmI) from Leptospira interrogans serogroup Icterohaemorrhagiae serovar Lai (strain 56601).